The primary structure comprises 266 residues: Undecaprenyl-diphosphatase (266 aa).

Transmembrane regions (helical) follow at residues Met1 to Val21, Leu40 to Leu60, Leu90 to Phe110, Leu113 to Thr133, Leu145 to Ile165, Phe188 to Val208, Pro217 to Phe237, and Phe245 to Met265.

Belongs to the UppP family.

The protein resides in the cell inner membrane. It carries out the reaction di-trans,octa-cis-undecaprenyl diphosphate + H2O = di-trans,octa-cis-undecaprenyl phosphate + phosphate + H(+). In terms of biological role, catalyzes the dephosphorylation of undecaprenyl diphosphate (UPP). Confers resistance to bacitracin. This is Undecaprenyl-diphosphatase from Acaryochloris marina (strain MBIC 11017).